An 85-amino-acid chain; its full sequence is UPF0386 protein RHECIAT_CH0001945 (85 aa).

This sequence belongs to the UPF0386 family.

This chain is UPF0386 protein RHECIAT_CH0001945, found in Rhizobium etli (strain CIAT 652).